The chain runs to 238 residues: uncharacterized protein (238 aa).

Residues 1 to 10 (MARGQNIRKR) show a composition bias toward basic residues. Disordered regions lie at residues 1–26 (MARG…IGIH) and 195–238 (LNTS…YDSF).

It belongs to the asfivirus DP238L family.

This is an uncharacterized protein from Ornithodoros (relapsing fever ticks).